The following is a 463-amino-acid chain: Rubisco accumulation factor 1, chloroplastic (463 aa).

The segment covering 1–18 (MLSLSHPHPHPAASTTAP) has biased composition (low complexity). The N-terminal 31 residues, 1–31 (MLSLSHPHPHPAASTTAPRHQRTAPVWHRRR), are a transit peptide targeting the chloroplast. The tract at residues 1–84 (MLSLSHPHPH…PFHPPPSPLP (84 aa)) is disordered. Over residues 19–33 (RHQRTAPVWHRRRAS) the composition is skewed to basic residues. Over residues 43–53 (PGGGSTGGRGG) the composition is skewed to gly residues. Residues 83-275 (LPPSLRNLDL…SGRARVELEL (193 aa)) form an N-terminal alpha-helix region. Residues 240 to 294 (RQSREAIDVQDRVAELERALQVVETESGRARVELELERARRKAAGEEEVDEEGEE) adopt a coiled-coil conformation. The tract at residues 305–450 (VTVVRLRYGE…AEVVIVVRPP (146 aa)) is C-terminal beta sheet.

The protein belongs to the RAF family. As to quaternary structure, homotrimer. As to expression, expressed in bundle sheath.

The protein resides in the plastid. Its subcellular location is the chloroplast. Functionally, required for assembly or stability of RuBisCO. Acts at a postchaperonin step to fold and/or assemble the large subunit (LS) into RuBisCO. This is Rubisco accumulation factor 1, chloroplastic from Zea mays (Maize).